Here is a 203-residue protein sequence, read N- to C-terminus: Large ribosomal subunit protein bL25 (203 aa).

Belongs to the bacterial ribosomal protein bL25 family. CTC subfamily. In terms of assembly, part of the 50S ribosomal subunit; part of the 5S rRNA/L5/L18/L25 subcomplex. Contacts the 5S rRNA. Binds to the 5S rRNA independently of L5 and L18.

In terms of biological role, this is one of the proteins that binds to the 5S RNA in the ribosome where it forms part of the central protuberance. This Cupriavidus metallidurans (strain ATCC 43123 / DSM 2839 / NBRC 102507 / CH34) (Ralstonia metallidurans) protein is Large ribosomal subunit protein bL25.